The chain runs to 409 residues: Broad specificity amino-acid racemase (409 aa).

A signal peptide spans 1 to 24 (MPFRRTLLAASLVLLITGQAPLYA). Cys-71 and Cys-97 are oxidised to a cystine. The active-site Proton acceptor is Lys-75. At Lys-75 the chain carries N6-(pyridoxal phosphate)lysine. Arg-174 provides a ligand contact to substrate. The Proton acceptor role is filled by Tyr-301. Met-349 is a substrate binding site.

This sequence belongs to the alanine racemase family. Bsr subfamily. As to quaternary structure, monomer. Forms a head-to-tail homodimer in the structure. It depends on pyridoxal 5'-phosphate as a cofactor.

The protein localises to the periplasm. It carries out the reaction an L-alpha-amino acid = a D-alpha-amino acid. The catalysed reaction is L-lysine = D-lysine. It catalyses the reaction L-arginine = D-arginine. The enzyme catalyses L-alanine = D-alanine. Activity is enhanced by Co(2+), Mn(2+) and Sr(2+), and decreased by Cu(2+). Its function is as follows. Amino-acid racemase that catalyzes the interconversion of L-lysine and D-lysine, and L-arginine and D-arginine. To a lesser extent, is also able to interconvert alanine and isoleucine enantiomers. In Pseudomonas putida (Arthrobacter siderocapsulatus), this protein is Broad specificity amino-acid racemase.